The chain runs to 436 residues: Trigger factor (436 aa).

Residues Gly-161–Pro-246 enclose the PPIase FKBP-type domain.

This sequence belongs to the FKBP-type PPIase family. Tig subfamily.

It is found in the cytoplasm. The enzyme catalyses [protein]-peptidylproline (omega=180) = [protein]-peptidylproline (omega=0). Involved in protein export. Acts as a chaperone by maintaining the newly synthesized protein in an open conformation. Functions as a peptidyl-prolyl cis-trans isomerase. The sequence is that of Trigger factor from Aeromonas hydrophila subsp. hydrophila (strain ATCC 7966 / DSM 30187 / BCRC 13018 / CCUG 14551 / JCM 1027 / KCTC 2358 / NCIMB 9240 / NCTC 8049).